Reading from the N-terminus, the 462-residue chain is Mitochondrial-processing peptidase subunit beta (462 aa).

Residues 1–20 (MFSRTASKFRNTRRLLSTIS) constitute a mitochondrion transit peptide. H70 contributes to the Zn(2+) binding site. The Proton acceptor role is filled by E73. The Zn(2+) site is built by H74 and E150. S243 is modified (phosphoserine).

The protein belongs to the peptidase M16 family. In terms of assembly, heterodimer of MAS2 (alpha) and MAS1 (beta) subunits, forming the mitochondrial processing protease (MPP) in which MAS2 is involved in substrate recognition and binding and MAS1 is the catalytic subunit. It depends on Zn(2+) as a cofactor.

The protein localises to the mitochondrion matrix. It catalyses the reaction Release of N-terminal transit peptides from precursor proteins imported into the mitochondrion, typically with Arg in position P2.. Its activity is regulated as follows. Binding to MAS2 is required for catalytic activity. Inhibited by high levels (&gt; 1uM) of zinc. Inhibited by metal chelators ethylenediaminetetraacetic acid (EDTA) and O-phenanthroline. Its function is as follows. Catalytic subunit of the essential mitochondrial processing protease (MPP), which cleaves the mitochondrial sequence off newly imported precursors proteins. Preferentially, cleaves after an arginine at position P2. This chain is Mitochondrial-processing peptidase subunit beta, found in Saccharomyces cerevisiae (strain ATCC 204508 / S288c) (Baker's yeast).